We begin with the raw amino-acid sequence, 85 residues long: MRPVVSTGKAWCCTVLSAFGVVILSVIAHLFNTNHESFVGSINDPEDGPAVAHTVYLAALVYLVFFVFCGFQVYLARRKPSIELR.

The Lumenal segment spans residues Met1–Ala10. Residues Trp11–Phe31 form a helical membrane-spanning segment. Over Asn32–Thr54 the chain is Cytoplasmic. A helical membrane pass occupies residues Val55 to Leu75. Residues Ala76 to Arg85 lie on the Lumenal side of the membrane.

As to quaternary structure, V-ATPase is a heteromultimeric enzyme composed of a peripheral catalytic V1 complex (components A to H) attached to an integral membrane V0 proton pore complex (components: a, c, c', c'', d, e, f and VOA1).

It is found in the endoplasmic reticulum membrane. The protein localises to the vacuole membrane. In terms of biological role, accessory component of the V0 complex of vacuolar(H+)-ATPase (V-ATPase), a multisubunit enzyme composed of a peripheral complex (V1) that hydrolyzes ATP and a membrane integral complex (V0) that translocates protons. V-ATPase is responsible for acidifying and maintaining the pH of intracellular compartments. This chain is V-type proton ATPase subunit f, found in Saccharomyces cerevisiae (strain ATCC 204508 / S288c) (Baker's yeast).